Reading from the N-terminus, the 72-residue chain is Large ribosomal subunit protein uL29 (72 aa).

Belongs to the universal ribosomal protein uL29 family.

The protein is Large ribosomal subunit protein uL29 of Chlamydia abortus (strain DSM 27085 / S26/3) (Chlamydophila abortus).